A 362-amino-acid polypeptide reads, in one-letter code: Heat-inducible transcription repressor HrcA (362 aa).

Belongs to the HrcA family.

In terms of biological role, negative regulator of class I heat shock genes (grpE-dnaK-dnaJ and groELS operons). Prevents heat-shock induction of these operons. The polypeptide is Heat-inducible transcription repressor HrcA (Rhizobium johnstonii (strain DSM 114642 / LMG 32736 / 3841) (Rhizobium leguminosarum bv. viciae)).